The following is a 114-amino-acid chain: Fumarate reductase subunit D (114 aa).

3 helical membrane passes run 24 to 44, 50 to 70, and 92 to 112; these read VSAI…PFGL, LITF…TIFP, and GGFI…FAVI.

Belongs to the FrdD family. Part of an enzyme complex containing four subunits: a flavoprotein (FrdA), an iron-sulfur protein (FrdB), and two hydrophobic anchor proteins (FrdC and FrdD).

The protein localises to the cell inner membrane. In terms of biological role, anchors the catalytic components of the fumarate reductase complex to the cell membrane, binds quinones. This Haemophilus influenzae (strain ATCC 51907 / DSM 11121 / KW20 / Rd) protein is Fumarate reductase subunit D.